The following is a 234-amino-acid chain: Phosphoribosylaminoimidazole-succinocarboxamide synthase (234 aa).

The protein belongs to the SAICAR synthetase family.

It carries out the reaction 5-amino-1-(5-phospho-D-ribosyl)imidazole-4-carboxylate + L-aspartate + ATP = (2S)-2-[5-amino-1-(5-phospho-beta-D-ribosyl)imidazole-4-carboxamido]succinate + ADP + phosphate + 2 H(+). The protein operates within purine metabolism; IMP biosynthesis via de novo pathway; 5-amino-1-(5-phospho-D-ribosyl)imidazole-4-carboxamide from 5-amino-1-(5-phospho-D-ribosyl)imidazole-4-carboxylate: step 1/2. The chain is Phosphoribosylaminoimidazole-succinocarboxamide synthase from Clostridium botulinum (strain Loch Maree / Type A3).